The primary structure comprises 554 residues: Valerianol synthase TPS1E (554 aa).

2 residues coordinate Mg(2+): aspartate 307 and aspartate 311. The DDXXD motif signature appears at 326–330; the sequence is VQRWD. Mg(2+) is bound by residues aspartate 452, serine 456, and glutamate 460.

The protein belongs to the terpene synthase family. Mg(2+) is required as a cofactor.

The catalysed reaction is (2E,6E)-farnesyl diphosphate + H2O = valerianol + diphosphate. It functions in the pathway secondary metabolite biosynthesis; terpenoid biosynthesis. In terms of biological role, terpene synthase that catalyzes the biosynthesis of the terpene valerianol, which is a volatile compound of floral scent. The protein is Valerianol synthase TPS1E of Camellia hiemalis (Camellia).